The primary structure comprises 365 residues: Saoe class I histocompatibility antigen, C alpha chain (365 aa).

An N-terminal signal peptide occupies residues 1–24; sequence MTIMAPRTLLLLLSGALSVTETWA. Positions 25–114 are alpha-1; the sequence is GSHSMRYFST…LLGYYNQSEA (90 aa). Over 25-308 the chain is Extracellular; that stretch reads GSHSMRYFST…EPPSQPTIPI (284 aa). N110 carries N-linked (GlcNAc...) asparagine glycosylation. The alpha-2 stretch occupies residues 115–206; the sequence is GFHTIQWMYG…ENGKEMLQRA (92 aa). 2 disulfides stabilise this stretch: C125-C188 and C227-C283. Residues 207–298 form an alpha-3 region; it reads EPPKTHVTHH…GLPEPFTLRW (92 aa). Residues 209-297 form the Ig-like C1-type domain; sequence PKTHVTHHPV…EGLPEPFTLR (89 aa). Residues 299–308 are connecting peptide; the sequence is EPPSQPTIPI. A helical membrane pass occupies residues 309-332; it reads MGIVAILAILGAVVTGAVVAAVMW. The Cytoplasmic portion of the chain corresponds to 333-365; that stretch reads RKKSSDKKGGSYSQAARSDSAQGSDVSLTACKV. Positions 337-365 are disordered; the sequence is SDKKGGSYSQAARSDSAQGSDVSLTACKV. Polar residues predominate over residues 346-359; the sequence is QAARSDSAQGSDVS. Residues S356 and S359 each carry the phosphoserine modification.

This sequence belongs to the MHC class I family. Heterodimer of an alpha chain and a beta chain (beta-2-microglobulin).

The protein localises to the membrane. In terms of biological role, involved in the presentation of foreign antigens to the immune system. This chain is Saoe class I histocompatibility antigen, C alpha chain, found in Saguinus oedipus (Cotton-top tamarin).